The primary structure comprises 151 residues: Putative pre-16S rRNA nuclease (151 aa).

Belongs to the YqgF nuclease family.

It localises to the cytoplasm. Its function is as follows. Could be a nuclease involved in processing of the 5'-end of pre-16S rRNA. The sequence is that of Putative pre-16S rRNA nuclease from Aster yellows witches'-broom phytoplasma (strain AYWB).